Consider the following 212-residue polypeptide: Pyridoxine/pyridoxamine 5'-phosphate oxidase (212 aa).

Residues arginine 61–lysine 66, phenylalanine 76–threonine 77, lysine 82, lysine 83, and glutamine 105 each bind FMN. Lysine 66 lines the substrate pocket. The substrate site is built by tyrosine 123, arginine 127, and serine 131. FMN contacts are provided by residues glutamine 140–serine 141 and tryptophan 185. A substrate-binding site is contributed by arginine 191–histidine 193. An FMN-binding site is contributed by arginine 195.

Belongs to the pyridoxamine 5'-phosphate oxidase family. In terms of assembly, homodimer. It depends on FMN as a cofactor.

It carries out the reaction pyridoxamine 5'-phosphate + O2 + H2O = pyridoxal 5'-phosphate + H2O2 + NH4(+). The enzyme catalyses pyridoxine 5'-phosphate + O2 = pyridoxal 5'-phosphate + H2O2. It participates in cofactor metabolism; pyridoxal 5'-phosphate salvage; pyridoxal 5'-phosphate from pyridoxamine 5'-phosphate: step 1/1. It functions in the pathway cofactor metabolism; pyridoxal 5'-phosphate salvage; pyridoxal 5'-phosphate from pyridoxine 5'-phosphate: step 1/1. Functionally, catalyzes the oxidation of either pyridoxine 5'-phosphate (PNP) or pyridoxamine 5'-phosphate (PMP) into pyridoxal 5'-phosphate (PLP). The chain is Pyridoxine/pyridoxamine 5'-phosphate oxidase from Vesicomyosocius okutanii subsp. Calyptogena okutanii (strain HA).